We begin with the raw amino-acid sequence, 929 residues long: SED5-binding protein 3 (929 aa).

Ser-15 is modified (phosphoserine). The span at 18 to 28 (ESTVHTGGASS) shows a compositional bias: polar residues. The segment at 18 to 52 (ESTVHTGGASSKKSRRPHRAYHNFSSGTVPTLGNS) is disordered. A compositionally biased stretch (basic residues) spans 29–38 (KKSRRPHRAY). Residues 40–52 (NFSSGTVPTLGNS) show a composition bias toward polar residues. A Phosphothreonine modification is found at Thr-72. A phosphoserine mark is found at Ser-83, Ser-85, Ser-94, Ser-101, and Ser-110. The residue at position 216 (Thr-216) is a Phosphothreonine. The tract at residues 220–244 (CRRCRAYANPKFQFTYDSSVICNIC) is zinc finger-like.

The protein belongs to the SEC23/SEC24 family. SEC24 subfamily. As to quaternary structure, COPII is composed of at least five proteins: the SEC23/24 complex, the SEC13/31 complex and SAR1. Binds to SED5. Interacts with GHR1.

The protein localises to the cytoplasm. It is found in the golgi apparatus membrane. The protein resides in the endoplasmic reticulum membrane. Component of the COPII coat, that covers ER-derived vesicles involved in transport from the endoplasmic reticulum to the Golgi apparatus. COPII acts in the cytoplasm to promote the transport of secretory, plasma membrane, and vacuolar proteins from the endoplasmic reticulum to the Golgi complex. In Saccharomyces cerevisiae (strain ATCC 204508 / S288c) (Baker's yeast), this protein is SED5-binding protein 3 (SFB3).